The following is a 303-amino-acid chain: tRNA dimethylallyltransferase (303 aa).

13–20 (GPTASGKS) contacts ATP. Residue 15 to 20 (TASGKS) coordinates substrate. Interaction with substrate tRNA stretches follow at residues 38 to 41 (DSMQ) and 162 to 166 (QRLLR).

It belongs to the IPP transferase family. Monomer. Requires Mg(2+) as cofactor.

It catalyses the reaction adenosine(37) in tRNA + dimethylallyl diphosphate = N(6)-dimethylallyladenosine(37) in tRNA + diphosphate. Catalyzes the transfer of a dimethylallyl group onto the adenine at position 37 in tRNAs that read codons beginning with uridine, leading to the formation of N6-(dimethylallyl)adenosine (i(6)A). The chain is tRNA dimethylallyltransferase from Methylocella silvestris (strain DSM 15510 / CIP 108128 / LMG 27833 / NCIMB 13906 / BL2).